A 121-amino-acid chain; its full sequence is Large ribosomal subunit protein bL12 (121 aa).

Belongs to the bacterial ribosomal protein bL12 family. In terms of assembly, homodimer. Part of the ribosomal stalk of the 50S ribosomal subunit. Forms a multimeric L10(L12)X complex, where L10 forms an elongated spine to which 2 to 4 L12 dimers bind in a sequential fashion. Binds GTP-bound translation factors.

Functionally, forms part of the ribosomal stalk which helps the ribosome interact with GTP-bound translation factors. Is thus essential for accurate translation. This chain is Large ribosomal subunit protein bL12, found in Shewanella pealeana (strain ATCC 700345 / ANG-SQ1).